A 94-amino-acid polypeptide reads, in one-letter code: Integration host factor subunit beta (94 aa).

This sequence belongs to the bacterial histone-like protein family. As to quaternary structure, heterodimer of an alpha and a beta chain.

This protein is one of the two subunits of integration host factor, a specific DNA-binding protein that functions in genetic recombination as well as in transcriptional and translational control. This chain is Integration host factor subunit beta, found in Mesorhizobium japonicum (strain LMG 29417 / CECT 9101 / MAFF 303099) (Mesorhizobium loti (strain MAFF 303099)).